A 210-amino-acid polypeptide reads, in one-letter code: High frequency lysogenization protein HflD homolog (210 aa).

Residues 103–130 adopt a coiled-coil conformation; the sequence is EAKAKLAERLQQIERQLPLYENDIMADQ.

Belongs to the HflD family.

The protein localises to the cytoplasm. Its subcellular location is the cell inner membrane. This chain is High frequency lysogenization protein HflD homolog, found in Actinobacillus pleuropneumoniae serotype 5b (strain L20).